Consider the following 198-residue polypeptide: RNA pyrophosphohydrolase (198 aa).

The 144-residue stretch at 6–149 (GYRPNVGIVI…KKEVYRKAMK (144 aa)) folds into the Nudix hydrolase domain. The Nudix box signature appears at 38–59 (GGINDNESAEQAMYRELFEEVG).

It belongs to the Nudix hydrolase family. RppH subfamily. The cofactor is a divalent metal cation.

Accelerates the degradation of transcripts by removing pyrophosphate from the 5'-end of triphosphorylated RNA, leading to a more labile monophosphorylated state that can stimulate subsequent ribonuclease cleavage. The polypeptide is RNA pyrophosphohydrolase (Pasteurella multocida (strain Pm70)).